The chain runs to 318 residues: Transaldolase (318 aa).

Lys-132 (schiff-base intermediate with substrate) is an active-site residue.

It belongs to the transaldolase family. Type 1 subfamily. Homodimer.

It localises to the cytoplasm. It carries out the reaction D-sedoheptulose 7-phosphate + D-glyceraldehyde 3-phosphate = D-erythrose 4-phosphate + beta-D-fructose 6-phosphate. It functions in the pathway carbohydrate degradation; pentose phosphate pathway; D-glyceraldehyde 3-phosphate and beta-D-fructose 6-phosphate from D-ribose 5-phosphate and D-xylulose 5-phosphate (non-oxidative stage): step 2/3. Functionally, transaldolase is important for the balance of metabolites in the pentose-phosphate pathway. This Shewanella baltica (strain OS155 / ATCC BAA-1091) protein is Transaldolase.